Here is a 300-residue protein sequence, read N- to C-terminus: Cytochrome f (300 aa).

Residues 1-32 form the signal peptide; the sequence is MMTYLSKQFSKLLFGQLLFLFIGNLLLKPVQA. Residues Tyr33, Cys53, Cys56, and His57 each contribute to the heme site. A helical membrane pass occupies residues 267–287; it reads LKTFIAFCVTVFIGQLAFVLK.

This sequence belongs to the cytochrome f family. As to quaternary structure, the 4 large subunits of the cytochrome b6-f complex are cytochrome b6, subunit IV (17 kDa polypeptide, petD), cytochrome f and the Rieske protein, while the 4 small subunits are PetG, PetL, PetM and PetN. The complex functions as a dimer. Heme is required as a cofactor.

The protein localises to the plastid. Its subcellular location is the chloroplast thylakoid membrane. Functionally, component of the cytochrome b6-f complex, which mediates electron transfer between photosystem II (PSII) and photosystem I (PSI), cyclic electron flow around PSI, and state transitions. This Cyanidioschyzon merolae (strain NIES-3377 / 10D) (Unicellular red alga) protein is Cytochrome f.